The following is a 179-amino-acid chain: Large ribosomal subunit protein uL5 (179 aa).

Belongs to the universal ribosomal protein uL5 family. In terms of assembly, part of the 50S ribosomal subunit; part of the 5S rRNA/L5/L18/L25 subcomplex. Contacts the 5S rRNA and the P site tRNA. Forms a bridge to the 30S subunit in the 70S ribosome.

In terms of biological role, this is one of the proteins that bind and probably mediate the attachment of the 5S RNA into the large ribosomal subunit, where it forms part of the central protuberance. In the 70S ribosome it contacts protein S13 of the 30S subunit (bridge B1b), connecting the 2 subunits; this bridge is implicated in subunit movement. Contacts the P site tRNA; the 5S rRNA and some of its associated proteins might help stabilize positioning of ribosome-bound tRNAs. The protein is Large ribosomal subunit protein uL5 of Bacillus pumilus (strain SAFR-032).